Here is a 223-residue protein sequence, read N- to C-terminus: Putative thymidylate synthase (223 aa).

Cysteine 146 is an active-site residue.

It belongs to the thymidylate synthase family. Archaeal-type ThyA subfamily. In terms of assembly, monomer.

It localises to the cytoplasm. The protein operates within pyrimidine metabolism; dTTP biosynthesis. May catalyze the biosynthesis of dTMP using an unknown cosubstrate. In vitro, also catalyzes the dehalogenation of 5-bromo-deoxyuridine monophosphate (Br-dUMP) and the tritium exchange of [5-3H]deoxyuridine monophosphate ([5-3H]dUMP). The protein is Putative thymidylate synthase (thyA) of Methanothermobacter marburgensis (strain ATCC BAA-927 / DSM 2133 / JCM 14651 / NBRC 100331 / OCM 82 / Marburg) (Methanobacterium thermoautotrophicum).